The sequence spans 488 residues: N-acyl-D-glutamate deacylase (488 aa).

Belongs to the metallo-dependent hydrolases superfamily. N-acyl-D-amino-acid deacylase family. Zn(2+) serves as cofactor.

The protein localises to the cytoplasm. The catalysed reaction is an N-acyl-D-glutamate + H2O = D-glutamate + a carboxylate. With respect to regulation, inhibited by cobalt, copper and EDTA. The sequence is that of N-acyl-D-glutamate deacylase from Alcaligenes xylosoxydans xylosoxydans (Achromobacter xylosoxidans).